We begin with the raw amino-acid sequence, 1773 residues long: MEHTASLPGYVREKLAELDLELSEGDITQKGYEKKRAKLLQPFLKKPEGDKVKSTPPPPYYNVKNANNSTNHGNINNDGVIVSSEGYSYVTEVPSLSSSQQRHSKKIDFHQQAAMSLSSAPQSGNAGAPGYENMRPQGGAVGDPGYQNTREPSAFQNQQSTNNSQHRQRRTQRKVTHNEKRYHSEVRQEAVQQALAALKGRPKPSLPMPSKRTSVLNRSPGCNDELDSSTDDESIPEETISPDKEYNYPRDHISNSILPPEPIIKPPIRESSMGSQQHARTDVKQNQITNQKYTAPNSAPERRPPQNLPPLPTSEPLSSDYPPIAYKRENDFSDKAFKQKQYNAPDITQFNNAHRAADRVTRYVNVSQNELNETDANGKWKVSAKIQQLLNTLKRPKRRPLPEFYEDNDIELEIAANTKDPNAPKPEGSTMTPVQGEQLSIPAGLPRTLECALQRYGTNSFKSPMATVLDPNGKVTTTLTYGKLLSRAQKIAHALSTKIFSKGPEQVTLKPGDRVALVYPNNDPLSFITAWYGCMFRGLVPLPIELPLSSSDTPPQQVGFLLSSCGITVALTSEACLKGLPKSTTTGEIAKLKGWPRLQWFVTEHLPKPPKEFNVGNLRADDSAAAYIEYTTDKEGSVMGVTVTRAAMINHCRALTMACHYTEGETIVCVLDFKREVGLWHSVLTSVLNGMHVIFIPYALMKLRPSSWMQLITKHRASCCLVKSRDLHWGLLATKDHKDISLSSLRMLLVADGANPWSLSSCDQFLSVFQAKGLRSDAICPCASSSEVFTVSLRRPGRGSCGFSPSATGRGVLSMAALSHGVVRVDSEDSLTSLTLQDCGQVMPAAQMVVVRSEGPPVLCKTDQVGEICVTSGSTSASYFGLDGMTNSTFKVQPLLEELEQPKDGNGTVNIISKPIGEDFYVRSGLLGFLGPGGLVFVCGSRDGLMTVTGRKHNADDIIATVLAVEPMRFIYRGRIAVFSIKVLRDERVCVIAEQRPDCSEEESFQWMSRVLQAVDSIHQVGIYCLALVPPNHLPKTPLGGIHLCEARRRFLEGSLHPANVLMCPHTCVTNLPKPRELHQGVQTAAKLSSSSGCGITDTGVGPASVMVGNLVQGNRLAEAHGRDVGLAEDCERKPQLITGVLRWRANTSPDHIIFTLLNSKGAIAKTLTCSELHKRAEKIAALLQERGRIEPGDHVALIFPPGLDLLCAFYGCLYLGAIPITIRPPHPQNLNTTLPTVRMIVDVSKSGIVLSIQPIIKLLKSREAATSIDPKTWPPILDIDDNPKRKYAGIATVSFDSSAYLDFSVSTCGRLSGVNITHRSLSSLCASLKLACELYPSRHVALCLDPYCGLGFVMWTLIGVYSGHHSILIAPYEVEANPSLWLSTLSQHRVRDTFCSYGVIELCTKALSNSIPSLKQRNIDLRCVRTCVVVAEERPRVQLTQQFCKLFQALGLNTRCVSTSFGCRVNPAICVQGASSAESAQVYVDMRALRNNRVALVERGAPNSLCVIESGKLLPGVKVIIANPETKGHCGDSHLGEIWVQAPHNANGYFTIYGDETDYNDHFNAKLVTGATSELYARTGYLGFLRRTECSQSASLLDETTPSVASRDSDTESLNSISQLQLNFSNVSLGGNSEHSLVGGASNANDQELHDAVYVVGAVDEVISLRGMNYHPIDIENSVMRCHKKIAECAVFTWTNLLVVVVELDGNESEALDLVPLVTNTVLEDHQLIVGVVVVVDPGVVPINSRGEKQRMHLRDGFLADQLDPIYVAYNM.

Residues 3-110 (HTASLPGYVR…QRHSKKIDFH (108 aa)) enclose the DMAP1-binding domain. Phosphotyrosine is present on residues Y60 and Y61. 2 disordered regions span residues 112-185 (QAAM…YHSE) and 198-319 (LKGR…PLSS). Polar residues-rich tracts occupy residues 113-125 (AAMSLSSAPQSGN) and 146-165 (YQNTREPSAFQNQQSTNNSQ). Residues 166–175 (HRQRRTQRKV) show a composition bias toward basic residues. Residues 176–185 (THNEKRYHSE) show a composition bias toward basic and acidic residues. Residues 224–236 (DELDSSTDDESIP) show a composition bias toward acidic residues. Basic and acidic residues predominate over residues 241–253 (SPDKEYNYPRDHI). Residues 272–297 (SMGSQQHARTDVKQNQITNQKYTAPN) show a composition bias toward polar residues.

This sequence belongs to the DIP2 family. Interacts with Disco. In terms of tissue distribution, expressed in the developing nervous system. Ubiquitously expressed in the developing brain. Within the mushroom body, a higher level is detected in the core of lobes and peduncle in the late third instar larva. Detected in whole mushroom body neuron structures at 48 hours after puparium formation and during later stages.

The protein localises to the cell membrane. Its function is as follows. Required for precise axonal bifurcation in mushroom body neurons by suppressing ectopic bifurcation and regulating the guidance of sister axons. May function by regulating expression of tdp1. Acts downstream of the serine/threonine-protein kinase Bsk to modulate the direction of axon projection. May play a role in fatty acid metabolism. This is Disco-interacting protein 2 from Drosophila melanogaster (Fruit fly).